An 89-amino-acid chain; its full sequence is MAISKTEKDNIIKEYATHEGDTGSVEVQVALLTADINNLTDHMKSHKHDHHSYVGLLKKIGHRRNLLRYLENNDINRYRELIKKLGLRR.

It belongs to the universal ribosomal protein uS15 family. In terms of assembly, part of the 30S ribosomal subunit. Forms a bridge to the 50S subunit in the 70S ribosome, contacting the 23S rRNA.

One of the primary rRNA binding proteins, it binds directly to 16S rRNA where it helps nucleate assembly of the platform of the 30S subunit by binding and bridging several RNA helices of the 16S rRNA. In terms of biological role, forms an intersubunit bridge (bridge B4) with the 23S rRNA of the 50S subunit in the ribosome. The polypeptide is Small ribosomal subunit protein uS15 (Lactobacillus helveticus (strain DPC 4571)).